The chain runs to 458 residues: Protein RICE SALT SENSITIVE 3 (458 aa).

Residues 1–17 (MVGSGAAGGGGGGGGGG) show a composition bias toward gly residues. Disordered stretches follow at residues 1–21 (MVGS…DHAR), 220–325 (TSPS…PEGD), 354–374 (GGGA…GHGG), and 386–458 (SHSN…TFLE). Positions 220–232 (TSPSPSSFPLKQQ) are enriched in low complexity. The segment covering 245–262 (HAPPQLPPGASPLFPPGP) has biased composition (pro residues). Low complexity predominate over residues 308–317 (QQPMAAPQQH). Positions 413 to 436 (SSSTTSTSPSVSASTAPAPPQQQQ) are enriched in low complexity.

In terms of assembly, interacts with BHLH094, BHLH089, TIFY11A/JAZ9 and TIFY11C/JAZ11. Forms a ternary complex with TIFY11A/JAZ9 and BHLH094 in the nucleus. Expressed in root tips. Expressed at high levels in the meristematic zone and at low levels in the elongation zone of the root tip.

The protein resides in the nucleus. The protein localises to the cytoplasm. In terms of biological role, involved in the repression of jasmonate (JA)-induced genes. Forms a ternary complex with TIFY11A/JAZ9 and BHLH094 to negatively regulate JA-responsive genes. Involved in transcriptional regulation in the root tip. Plays a regulatory role in root cell elongation. Regulates root cell elongation during salt stress. The chain is Protein RICE SALT SENSITIVE 3 from Oryza sativa subsp. japonica (Rice).